The sequence spans 432 residues: Enolase (432 aa).

Gln-167 is a binding site for (2R)-2-phosphoglycerate. Glu-209 serves as the catalytic Proton donor. The Mg(2+) site is built by Asp-246, Glu-290, and Asp-317. Positions 342, 371, 372, and 393 each coordinate (2R)-2-phosphoglycerate. Lys-342 (proton acceptor) is an active-site residue.

This sequence belongs to the enolase family. In terms of assembly, component of the RNA degradosome, a multiprotein complex involved in RNA processing and mRNA degradation. Mg(2+) is required as a cofactor.

Its subcellular location is the cytoplasm. The protein resides in the secreted. It is found in the cell surface. The catalysed reaction is (2R)-2-phosphoglycerate = phosphoenolpyruvate + H2O. It participates in carbohydrate degradation; glycolysis; pyruvate from D-glyceraldehyde 3-phosphate: step 4/5. Functionally, catalyzes the reversible conversion of 2-phosphoglycerate (2-PG) into phosphoenolpyruvate (PEP). It is essential for the degradation of carbohydrates via glycolysis. This Klebsiella pneumoniae (strain 342) protein is Enolase.